We begin with the raw amino-acid sequence, 185 residues long: Large ribosomal subunit protein uL5 (185 aa).

The protein belongs to the universal ribosomal protein uL5 family. As to quaternary structure, part of the 50S ribosomal subunit; part of the 5S rRNA/L5/L18/L25 subcomplex. Contacts the 5S rRNA and the P site tRNA. Forms a bridge to the 30S subunit in the 70S ribosome.

Functionally, this is one of the proteins that bind and probably mediate the attachment of the 5S RNA into the large ribosomal subunit, where it forms part of the central protuberance. In the 70S ribosome it contacts protein S13 of the 30S subunit (bridge B1b), connecting the 2 subunits; this bridge is implicated in subunit movement. Contacts the P site tRNA; the 5S rRNA and some of its associated proteins might help stabilize positioning of ribosome-bound tRNAs. In Bradyrhizobium diazoefficiens (strain JCM 10833 / BCRC 13528 / IAM 13628 / NBRC 14792 / USDA 110), this protein is Large ribosomal subunit protein uL5.